The chain runs to 156 residues: Peptide deformylase 1 (156 aa).

Residues Cys90 and His132 each contribute to the Fe cation site. The active site involves Glu133. Fe cation is bound at residue His136.

The protein belongs to the polypeptide deformylase family. The cofactor is Fe(2+).

The enzyme catalyses N-terminal N-formyl-L-methionyl-[peptide] + H2O = N-terminal L-methionyl-[peptide] + formate. Its function is as follows. Removes the formyl group from the N-terminal Met of newly synthesized proteins. Requires at least a dipeptide for an efficient rate of reaction. N-terminal L-methionine is a prerequisite for activity but the enzyme has broad specificity at other positions. This is Peptide deformylase 1 from Bacillus cereus (strain ATCC 14579 / DSM 31 / CCUG 7414 / JCM 2152 / NBRC 15305 / NCIMB 9373 / NCTC 2599 / NRRL B-3711).